The sequence spans 730 residues: Polyribonucleotide nucleotidyltransferase (730 aa).

D489 and D495 together coordinate Mg(2+). Positions 556 to 615 constitute a KH domain; it reads PKIDTIKVDVDKIKIVIGKGGETIDKIIEETGVKIDIDEDGNIAIYSSDQEAINRTKEII. The region spanning 625 to 693 is the S1 motif domain; it reads GEIYEAEVVR…DKGRIDASMK (69 aa). Positions 691–730 are disordered; sequence SMKALLPRPPRSEKSNKEDHQSVRHHGSPKDDKGKEKYDK. The span at 700 to 730 shows a compositional bias: basic and acidic residues; sequence PRSEKSNKEDHQSVRHHGSPKDDKGKEKYDK.

This sequence belongs to the polyribonucleotide nucleotidyltransferase family. Requires Mg(2+) as cofactor.

The protein localises to the cytoplasm. The enzyme catalyses RNA(n+1) + phosphate = RNA(n) + a ribonucleoside 5'-diphosphate. Its function is as follows. Involved in mRNA degradation. Catalyzes the phosphorolysis of single-stranded polyribonucleotides processively in the 3'- to 5'-direction. In Streptococcus mutans serotype c (strain ATCC 700610 / UA159), this protein is Polyribonucleotide nucleotidyltransferase.